The primary structure comprises 475 residues: 23S rRNA (uracil(1939)-C(5))-methyltransferase RlmD (475 aa).

The span at 1 to 10 shows a compositional bias: basic residues; the sequence is MAMLGKRRPP. A disordered region spans residues 1-33; the sequence is MAMLGKRRPPRTANERVRRERGSATRRDDATAD. A compositionally biased stretch (basic and acidic residues) spans 13-30; sequence ANERVRRERGSATRRDDA. The TRAM domain occupies 26–85; sequence RRDDATADGLSIERLAHDGRGVARDPHGKTVFVDQALPGERVRVAVHRQRKRFDEAHVVE. Cys-98, Cys-104, Cys-107, and Cys-183 together coordinate [4Fe-4S] cluster. The S-adenosyl-L-methionine site is built by Gln-294, Phe-323, Asn-328, Glu-344, Asp-371, and Asp-388. The active-site Nucleophile is the Cys-414. Residues 455–475 form a disordered region; sequence TRDTPRGRSTSVEREDHGQGP. A compositionally biased stretch (basic and acidic residues) spans 457–475; it reads DTPRGRSTSVEREDHGQGP.

It belongs to the class I-like SAM-binding methyltransferase superfamily. RNA M5U methyltransferase family. RlmD subfamily.

It catalyses the reaction uridine(1939) in 23S rRNA + S-adenosyl-L-methionine = 5-methyluridine(1939) in 23S rRNA + S-adenosyl-L-homocysteine + H(+). Functionally, catalyzes the formation of 5-methyl-uridine at position 1939 (m5U1939) in 23S rRNA. The polypeptide is 23S rRNA (uracil(1939)-C(5))-methyltransferase RlmD (Chromohalobacter salexigens (strain ATCC BAA-138 / DSM 3043 / CIP 106854 / NCIMB 13768 / 1H11)).